The chain runs to 697 residues: Glycine--tRNA ligase beta subunit (697 aa).

This sequence belongs to the class-II aminoacyl-tRNA synthetase family. Tetramer of two alpha and two beta subunits.

It is found in the cytoplasm. It catalyses the reaction tRNA(Gly) + glycine + ATP = glycyl-tRNA(Gly) + AMP + diphosphate. The sequence is that of Glycine--tRNA ligase beta subunit from Solidesulfovibrio magneticus (strain ATCC 700980 / DSM 13731 / RS-1) (Desulfovibrio magneticus).